Consider the following 121-residue polypeptide: Putative RNase MJ1216 (121 aa).

Catalysis depends on residues arginine 76 and histidine 81. An RX(4)HXY motif motif is present at residues 76–83; that stretch reads RDKLIHQY. At tyrosine 83 the chain carries O-di-AMP-tyrosine.

Belongs to the HepT RNase toxin family. Homodimer, probably forms a complex with antitoxin MJ1215 or MJ1217. Modified by antitoxin MJ1215 or MJ1217; probably at least 2 successive AMPylation events occur on Tyr-83.

Its function is as follows. Probable toxic component of a putative type VII toxin-antitoxin (TA) system, probably an RNase. Probably neutralized by antitoxin MJ1215 or MJ1217. Neutralization may be due to AMPylation by antitoxin. This is Putative RNase MJ1216 from Methanocaldococcus jannaschii (strain ATCC 43067 / DSM 2661 / JAL-1 / JCM 10045 / NBRC 100440) (Methanococcus jannaschii).